The sequence spans 894 residues: Microsomal triglyceride transfer protein large subunit (894 aa).

An N-terminal signal peptide occupies residues 1 to 18; it reads MILLAVLFLCFISSYSAS. One can recognise a Vitellogenin domain in the interval 28-662; it reads LNNDRLYKLK…YVGKTPLHAI (635 aa). Cysteine 174 and cysteine 194 are oxidised to a cystine.

Heterodimer; heterodimerizes with the protein disulfide isomerase (P4HB/PDI). Interacts with APOB. Interacts with PRAP1.

Its subcellular location is the endoplasmic reticulum. The protein resides in the golgi apparatus. The enzyme catalyses a 1,2-diacyl-sn-glycero-3-phosphocholine(in) = a 1,2-diacyl-sn-glycero-3-phosphocholine(out). The catalysed reaction is a 1,2-diacyl-sn-glycero-3-phosphoethanolamine(in) = a 1,2-diacyl-sn-glycero-3-phosphoethanolamine(out). It carries out the reaction a cholesterol ester(in) = a cholesterol ester(out). It catalyses the reaction a triacyl-sn-glycerol(in) = a triacyl-sn-glycerol(out). Its function is as follows. Catalyzes the transport of triglyceride, cholesteryl ester, and phospholipid between phospholipid surfaces. Required for the assembly and secretion of plasma lipoproteins that contain apolipoprotein B. May be involved in regulating cholesteryl ester biosynthesis in cells that produce lipoproteins. The chain is Microsomal triglyceride transfer protein large subunit (MTTP) from Sus scrofa (Pig).